Reading from the N-terminus, the 363-residue chain is Glutamate 5-kinase (363 aa).

Residue Lys-3 coordinates ATP. Ser-43, Asp-128, and Asn-140 together coordinate substrate. ATP is bound by residues 160 to 161 and 202 to 208; these read TD and TGGMRTK. Residues 267–349 form the PUA domain; that stretch reads AGAILIDDGA…REIENVLGYS (83 aa).

Belongs to the glutamate 5-kinase family.

It localises to the cytoplasm. The enzyme catalyses L-glutamate + ATP = L-glutamyl 5-phosphate + ADP. It participates in amino-acid biosynthesis; L-proline biosynthesis; L-glutamate 5-semialdehyde from L-glutamate: step 1/2. Catalyzes the transfer of a phosphate group to glutamate to form L-glutamate 5-phosphate. This is Glutamate 5-kinase from Xanthomonas axonopodis pv. citri (strain 306).